A 431-amino-acid chain; its full sequence is Tyrosine--tRNA ligase (431 aa).

Tyr33 lines the L-tyrosine pocket. The 'HIGH' region motif lies at 38-47 (PTADSLHIGS). Positions 172 and 176 each coordinate L-tyrosine. Positions 234-238 (KFGKS) match the 'KMSKS' region motif. Lys237 is an ATP binding site. An S4 RNA-binding domain is found at 364–431 (LDIVTVLNEK…KKNYFVIRVV (68 aa)).

The protein belongs to the class-I aminoacyl-tRNA synthetase family. TyrS type 1 subfamily. Homodimer.

The protein resides in the cytoplasm. The catalysed reaction is tRNA(Tyr) + L-tyrosine + ATP = L-tyrosyl-tRNA(Tyr) + AMP + diphosphate + H(+). Catalyzes the attachment of tyrosine to tRNA(Tyr) in a two-step reaction: tyrosine is first activated by ATP to form Tyr-AMP and then transferred to the acceptor end of tRNA(Tyr). The protein is Tyrosine--tRNA ligase of Flavobacterium johnsoniae (strain ATCC 17061 / DSM 2064 / JCM 8514 / BCRC 14874 / CCUG 350202 / NBRC 14942 / NCIMB 11054 / UW101) (Cytophaga johnsonae).